The following is a 207-amino-acid chain: Anthranilate synthase component II (207 aa).

The Glutamine amidotransferase type-1 domain occupies 17–207; sequence RVLFVDNFDS…DVIRNFLAGL (191 aa). Residue 66–68 coordinates L-glutamine; it reads GPG. Residue Cys-96 is the Nucleophile; for GATase activity of the active site. 146 to 147 is a binding site for L-glutamine; it reads SL. Active-site residues include His-187 and Glu-189.

In terms of assembly, tetramer of two components I and two components II.

The catalysed reaction is chorismate + L-glutamine = anthranilate + pyruvate + L-glutamate + H(+). Its pathway is amino-acid biosynthesis; L-tryptophan biosynthesis; L-tryptophan from chorismate: step 1/5. The protein is Anthranilate synthase component II (trpG1) of Haloarcula marismortui (strain ATCC 43049 / DSM 3752 / JCM 8966 / VKM B-1809) (Halobacterium marismortui).